A 340-amino-acid polypeptide reads, in one-letter code: Dihydroorotate dehydrogenase (quinone) (340 aa).

Residues 62–66 (AGMDK) and T86 contribute to the FMN site. Residue K66 coordinates substrate. 111-115 (NRMGF) contributes to the substrate binding site. Positions 139 and 172 each coordinate FMN. Residue N172 coordinates substrate. The Nucleophile role is filled by S175. N177 contributes to the substrate binding site. The FMN site is built by K217 and T245. Position 246 to 247 (246 to 247 (NT)) interacts with substrate. Residues G268, G297, and 318-319 (YS) each bind FMN.

Belongs to the dihydroorotate dehydrogenase family. Type 2 subfamily. As to quaternary structure, monomer. FMN is required as a cofactor.

It localises to the cell membrane. It carries out the reaction (S)-dihydroorotate + a quinone = orotate + a quinol. Its pathway is pyrimidine metabolism; UMP biosynthesis via de novo pathway; orotate from (S)-dihydroorotate (quinone route): step 1/1. In terms of biological role, catalyzes the conversion of dihydroorotate to orotate with quinone as electron acceptor. The chain is Dihydroorotate dehydrogenase (quinone) from Shewanella woodyi (strain ATCC 51908 / MS32).